Reading from the N-terminus, the 1192-residue chain is ATP-dependent helicase/deoxyribonuclease subunit B (1192 aa).

The protein belongs to the helicase family. AddB/RexB type 2 subfamily. In terms of assembly, heterodimer of AddA and RexB. The cofactor is Mg(2+).

Its function is as follows. The heterodimer acts as both an ATP-dependent DNA helicase and an ATP-dependent, dual-direction single-stranded exonuclease. Recognizes the chi site generating a DNA molecule suitable for the initiation of homologous recombination. This subunit has 5' -&gt; 3' nuclease activity but not helicase activity. The sequence is that of ATP-dependent helicase/deoxyribonuclease subunit B from Pediococcus pentosaceus (strain ATCC 25745 / CCUG 21536 / LMG 10740 / 183-1w).